Consider the following 274-residue polypeptide: 2,3,4,5-tetrahydropyridine-2,6-dicarboxylate N-succinyltransferase (274 aa).

Residues Arg-106 and Asp-143 each coordinate substrate.

Belongs to the transferase hexapeptide repeat family. Homotrimer.

It localises to the cytoplasm. It carries out the reaction (S)-2,3,4,5-tetrahydrodipicolinate + succinyl-CoA + H2O = (S)-2-succinylamino-6-oxoheptanedioate + CoA. Its pathway is amino-acid biosynthesis; L-lysine biosynthesis via DAP pathway; LL-2,6-diaminopimelate from (S)-tetrahydrodipicolinate (succinylase route): step 1/3. The sequence is that of 2,3,4,5-tetrahydropyridine-2,6-dicarboxylate N-succinyltransferase from Rickettsia typhi (strain ATCC VR-144 / Wilmington).